Here is a 495-residue protein sequence, read N- to C-terminus: Putative BTB/POZ domain-containing protein L98 (495 aa).

In terms of domain architecture, BTB spans 15–85 (SDLTIEFVDN…FYGIETTNDY (71 aa)).

The protein belongs to the mimivirus BTB/WD family.

The chain is Putative BTB/POZ domain-containing protein L98 from Acanthamoeba polyphaga (Amoeba).